The following is a 352-amino-acid chain: Holliday junction branch migration complex subunit RuvB (352 aa).

The segment at 1 to 42 (MAIVSSSAGRADSQPPAAKSRVVDASPLPEEASPAREDGLRP) is disordered. Positions 13-201 (SQPPAAKSRV…FGLIQRLEFY (189 aa)) are large ATPase domain (RuvB-L). Basic and acidic residues predominate over residues 33-42 (SPAREDGLRP). ATP-binding residues include L40, R41, G82, K85, T86, T87, R191, Y201, and R238. A Mg(2+)-binding site is contributed by T86. The interval 202 to 273 (GLEDLQAIVE…LVDEALTLHR (72 aa)) is small ATPAse domain (RuvB-S). The segment at 276-352 (ARGLDASDRR…RRHLGWPELP (77 aa)) is head domain (RuvB-H). DNA-binding residues include R331 and R336.

The protein belongs to the RuvB family. Homohexamer. Forms an RuvA(8)-RuvB(12)-Holliday junction (HJ) complex. HJ DNA is sandwiched between 2 RuvA tetramers; dsDNA enters through RuvA and exits via RuvB. An RuvB hexamer assembles on each DNA strand where it exits the tetramer. Each RuvB hexamer is contacted by two RuvA subunits (via domain III) on 2 adjacent RuvB subunits; this complex drives branch migration. In the full resolvosome a probable DNA-RuvA(4)-RuvB(12)-RuvC(2) complex forms which resolves the HJ.

The protein localises to the cytoplasm. It carries out the reaction ATP + H2O = ADP + phosphate + H(+). Functionally, the RuvA-RuvB-RuvC complex processes Holliday junction (HJ) DNA during genetic recombination and DNA repair, while the RuvA-RuvB complex plays an important role in the rescue of blocked DNA replication forks via replication fork reversal (RFR). RuvA specifically binds to HJ cruciform DNA, conferring on it an open structure. The RuvB hexamer acts as an ATP-dependent pump, pulling dsDNA into and through the RuvAB complex. RuvB forms 2 homohexamers on either side of HJ DNA bound by 1 or 2 RuvA tetramers; 4 subunits per hexamer contact DNA at a time. Coordinated motions by a converter formed by DNA-disengaged RuvB subunits stimulates ATP hydrolysis and nucleotide exchange. Immobilization of the converter enables RuvB to convert the ATP-contained energy into a lever motion, pulling 2 nucleotides of DNA out of the RuvA tetramer per ATP hydrolyzed, thus driving DNA branch migration. The RuvB motors rotate together with the DNA substrate, which together with the progressing nucleotide cycle form the mechanistic basis for DNA recombination by continuous HJ branch migration. Branch migration allows RuvC to scan DNA until it finds its consensus sequence, where it cleaves and resolves cruciform DNA. This is Holliday junction branch migration complex subunit RuvB from Prochlorococcus marinus (strain MIT 9303).